The chain runs to 908 residues: MGVPAFFRWLSRKYPSVIIECNENKQVDADTGRNIYEDPTLPNPNGIEFDNLYLDMNGIIHPCTHPEDKPAPKNEDEMMVAIFECIDRLFGIVRPRKLLYMAIDGVAPRAKMNQQRSRRFRAAKETTEKRLEIARIREELLSRGCKLPPEKEKGEHFDSNCITPGTPFMDRLSKCLHYFVHDRQNNNPAWKGIKVILSDANVPGEGEHKIMDYIRKQRAQPDHDPNTQHVLCGADADLIMLGLATHEPNFTIIREEFLPNKPRPCDICNGFGHEMDKCVGLGATAPTSANFKPDVPIGAEVKFIFVRLSVLREYLKQTLEMPNLPFEYSFERALDDWVFMCFFVGNDFLPHLPSLEIREGAVDRLVELYKKCVYKTRGYLTDSGDVNLDRVQLIMTDLGNAEDQIFKSRQRREEQFKARDKARKRQERNQDHGSLNQSAFGASAVGPNSQQRSVGNYKEEAAALRNRKRTSDMANLDDEDEEENNDEVRLWEDGFKDRYYESKFDVAPGNQQFRYAVALQYVRGLCWVLKYYYQGCASWNWYFPYHYAPFASDFVNIQGLSTMFEKGTKPFNPLEQLMGVFPAASSSHVPEPWAKLMSDPESPIIDFYPEDFKIDLNGKKFAWQGVALLPFVDEKRLFKALVPYYDQLTGEEVKRNKRGDNYLYISNQSPHYKKVKKISEKDDESVCKAISFDGMRGTLGKTELNTAISGVLKSPISGLSDINDNITVTTTFRDPEYDEDYIFEAKRLENAVDPPQVLPNEQSGNKHRPVIGFNSHLTRAYVPDSGHRMLNAGIRNQQGGGGNGGGGGGYGQGGGYGQGIGGNQGQSYQNNSRNYNYNYNNNYNQHQGGGYQNNYNNRQQQQYGHNQRFNQDNSNQQQRNFNNYNGPRNNNYQQQGGSRQQNQNYRRF.

The segment at 263-280 adopts a CCHC-type zinc-finger fold; it reads RPCDICNGFGHEMDKCVG. Disordered stretches follow at residues 409–457 and 821–908; these read RQRR…VGNY and GGNQ…YRRF. Residues 432-454 show a composition bias toward polar residues; the sequence is HGSLNQSAFGASAVGPNSQQRSV. S438 bears the Phosphoserine mark. Low complexity-rich tracts occupy residues 825-868 and 878-908; these read GQSY…HNQR and QRNF…YRRF.

Belongs to the 5'-3' exonuclease family. XRN2/RAT1 subfamily. Interacts with cuff and Rai1; the interaction with cuff may inhibit its role in RNA degradation.

The protein resides in the nucleus. In terms of biological role, a 5'-3' exoribonuclease. May promote the termination of transcription by RNA polymerase II and promote RNA degradation. Involved in turnover of piRNA precursors. This chain is 5'-3' exoribonuclease 2 homolog, found in Drosophila melanogaster (Fruit fly).